Here is a 138-residue protein sequence, read N- to C-terminus: ATP synthase epsilon chain (138 aa).

The protein belongs to the ATPase epsilon chain family. In terms of assembly, F-type ATPases have 2 components, CF(1) - the catalytic core - and CF(0) - the membrane proton channel. CF(1) has five subunits: alpha(3), beta(3), gamma(1), delta(1), epsilon(1). CF(0) has three main subunits: a, b and c.

It localises to the cell inner membrane. Functionally, produces ATP from ADP in the presence of a proton gradient across the membrane. In Geobacter sp. (strain M21), this protein is ATP synthase epsilon chain.